Consider the following 953-residue polypeptide: Xylosyltransferase 1 (953 aa).

The Cytoplasmic segment spans residues 1-17 (MVAAPCARRLARRSHSA). Residues 18–38 (LLAALMVLLLHTLVVWNFSSL) traverse the membrane as a helical; Signal-anchor for type II membrane protein segment. Topologically, residues 39–953 (DSGAGEQRRA…GAVKPDGRLR (915 aa)) are lumenal. Positions 48–62 (AGAAAGAAEQQQPAA) are enriched in low complexity. Disordered regions lie at residues 48 to 67 (AGAA…RRER) and 74 to 251 (LPAA…APKC). Gly residues predominate over residues 79–97 (GGPGGRAGGGGARGGGPGG). Basic and acidic residues predominate over residues 138 to 154 (KVRTDSNNENSVPKDFE). The span at 156 to 165 (VDNSNFAPRT) shows a compositional bias: polar residues. 2 stretches are compositionally biased toward basic and acidic residues: residues 170 to 197 (HQPE…DKRQ) and 205 to 216 (GPKEVLPPREKA). An N-linked (GlcNAc...) asparagine glycan is attached at Asn219. 4 cysteine pairs are disulfide-bonded: Cys251–Cys279, Cys295–Cys536, Cys555–Cys568, and Cys557–Cys566. UDP-alpha-D-xylose contacts are provided by residues Val327, Asp355, and 384-386 (TIW). Asn415 is a glycosylation site (N-linked (GlcNAc...) asparagine). A UDP-alpha-D-xylose-binding site is contributed by 488–489 (DW). UDP-alpha-D-xylose-binding positions include Ser569 and 592-593 (RK). Disulfide bonds link Cys669-Cys921 and Cys914-Cys927. N-linked (GlcNAc...) asparagine glycosylation occurs at Asn771. The disordered stretch occupies residues 933-953 (SSFSPDPKSELGAVKPDGRLR).

It belongs to the glycosyltransferase 14 family. XylT subfamily. In terms of assembly, monomer. A divalent metal cation serves as cofactor. Contains 7 disulfide bonds. In terms of processing, N-glycosylated. In terms of tissue distribution, detected in brain, spleen, kidney and testis, and at low levels in skeletal muscle.

It localises to the golgi apparatus membrane. It carries out the reaction UDP-alpha-D-xylose + L-seryl-[protein] = 3-O-(beta-D-xylosyl)-L-seryl-[protein] + UDP + H(+). It participates in glycan metabolism; chondroitin sulfate biosynthesis. It functions in the pathway glycan metabolism; heparan sulfate biosynthesis. Its function is as follows. Catalyzes the first step in the biosynthesis of chondroitin sulfate and dermatan sulfate proteoglycans, such as DCN. Transfers D-xylose from UDP-D-xylose to specific serine residues of the core protein. Required for normal maturation of chondrocytes during bone development, normal onset of ossification and normal embryonic and postnatal skeleton development, especially of the long bones. The sequence is that of Xylosyltransferase 1 (Xylt1) from Mus musculus (Mouse).